The following is a 285-amino-acid chain: ATP synthase subunit a (285 aa).

6 helical membrane-spanning segments follow: residues 41-61, 102-122, 164-184, 197-217, 226-246, and 252-272; these read TWHV…LWIF, IAPL…MDLI, LGVF…GGFI, VFVQ…ALVS, LFGN…IGFM, and FVWA…FMML.

It belongs to the ATPase A chain family. In terms of assembly, F-type ATPases have 2 components, CF(1) - the catalytic core - and CF(0) - the membrane proton channel. CF(1) has five subunits: alpha(3), beta(3), gamma(1), delta(1), epsilon(1). CF(0) has three main subunits: a(1), b(2) and c(9-12). The alpha and beta chains form an alternating ring which encloses part of the gamma chain. CF(1) is attached to CF(0) by a central stalk formed by the gamma and epsilon chains, while a peripheral stalk is formed by the delta and b chains.

The protein localises to the cell inner membrane. Functionally, key component of the proton channel; it plays a direct role in the translocation of protons across the membrane. The protein is ATP synthase subunit a of Pseudoalteromonas translucida (strain TAC 125).